The following is a 915-amino-acid chain: MSDFWDKNKGSIASGFKSAGKYTYQGAKYVGKSGYNASKNHYNKSKEQRDKRDKKKGKKKNGDDEYSGDDSYSDDDSSYSTASIPVSSMKDPNSFPPPPLKPQQVQATSSSHSVEQYPASAGVPQQQLRQLPPQPISATQQPAWPQQPAANQYDGQVSAPDQSQMQYGGQTQYQQPPAMQQPPAMQQHPAMQQPPDMQQPPDMQQPPAMQQPPAMQQPPAMQQPPAMQQPPAMQQPPAMQQPPAMQQPPNMVGQPSNQFQLPEPQQRQTPPLPPVTSQPYGEAQNQAQNQGQFQATPLSQLQNMQQEETTRSVPNAYDPQQTYSQPPSIPQRHTPQPVVNQVQYQESQSSIPQVNQDYYGQQPEVNQQNNLMNRSIPPPMQQQPPMQQQPPMQQQPPMQQQPPMQQQPPMPPRGPSLAAPAYGGTPNINANAQLPASSGITVKPYNPDEVQTREPLALKVDIGNLPPPPTHRDRGTETRPPSEPKPSPAIRNPISAVPAVSRASTLDSSSVPVNSIPAHQNQPIYMQDNSSSVESFPDEETSDFNNLPPPPPPNRRVTEQNLEKSAKSSTIGQEQRNDSKTEPPRAAIVGSFNSNPTINFEPPPKPFRPVVNSDRKSESPVQPQPLARSANGPPALPSRRGTQTSFESHPTPPSMESSTPSLPNRLNRNEPPIAEKPVSSFPPPPKPFRRVEAESPSHSQVNDSNKESSAPRTHNFGNDEDEDISAPVKWNPPAELLERKSEIDVKKGKKAPPPVVKPKPKNLSSVNKVNPEYEGHKPVGSMNQNQNQNQNQNSLNSITDELTHVHLRKTGISLEDEGKKFGGNDTSIDDIPPKFEKIETSRKPKAPPAVPKKKDSIRGAPPPVPAKKKNLNATPQPPPSRRNNNVNNDNDDDDSNPFEKYMRDAVPAEENRLRK.

The tract at residues Val30–Lys915 is disordered. Residues Asp64 to Ser77 are compositionally biased toward acidic residues. Positions Gln103–Val114 are enriched in polar residues. Composition is skewed to low complexity over residues Gln140 to Gln152 and Gln162 to Pro249. Positions Gly253–Thr269 are enriched in polar residues. Over residues Ala283 to Ala295 the composition is skewed to low complexity. The span at Thr296–Asn373 shows a compositional bias: polar residues. Over residues Gln383–Met404 the composition is skewed to low complexity. Residues Gln405 to Gly414 are compositionally biased toward pro residues. Residues Pro426–Ile440 are compositionally biased toward polar residues. Over residues Thr470–Ser482 the composition is skewed to basic and acidic residues. Residues Arg502–Glu534 are compositionally biased toward polar residues. Positions Arg556–Ala566 are enriched in basic and acidic residues. Over residues Ser654 to Pro663 the composition is skewed to low complexity. Residues Pro696–Phe716 show a composition bias toward polar residues. Basic and acidic residues predominate over residues Leu736 to Lys746. Low complexity predominate over residues Asn783–Asn793. The span at Ile831–Arg842 shows a compositional bias: basic and acidic residues.

The protein belongs to the AIM3 family.

The protein resides in the membrane raft. The protein is Altered inheritance of mitochondria protein 3 (AIM3) of Vanderwaltozyma polyspora (strain ATCC 22028 / DSM 70294 / BCRC 21397 / CBS 2163 / NBRC 10782 / NRRL Y-8283 / UCD 57-17) (Kluyveromyces polysporus).